A 494-amino-acid chain; its full sequence is Glutamyl-tRNA(Gln) amidotransferase subunit A (494 aa).

Active-site charge relay system residues include Lys-79 and Ser-154. Ser-178 (acyl-ester intermediate) is an active-site residue.

The protein belongs to the amidase family. GatA subfamily. As to quaternary structure, heterotrimer of A, B and C subunits.

It catalyses the reaction L-glutamyl-tRNA(Gln) + L-glutamine + ATP + H2O = L-glutaminyl-tRNA(Gln) + L-glutamate + ADP + phosphate + H(+). Functionally, allows the formation of correctly charged Gln-tRNA(Gln) through the transamidation of misacylated Glu-tRNA(Gln) in organisms which lack glutaminyl-tRNA synthetase. The reaction takes place in the presence of glutamine and ATP through an activated gamma-phospho-Glu-tRNA(Gln). The sequence is that of Glutamyl-tRNA(Gln) amidotransferase subunit A from Clostridium kluyveri (strain NBRC 12016).